A 45-amino-acid polypeptide reads, in one-letter code: HADGMFNKAYRKALGQLSARKYLHTLMAKRVGGGSMIEDDNEPLS.

Belongs to the glucagon family.

Its subcellular location is the secreted. Functionally, GRF is released by the hypothalamus and acts on the adenohypophyse to stimulate the secretion of growth hormone. The polypeptide is Somatoliberin (ghrh) (Cyprinus carpio (Common carp)).